A 497-amino-acid polypeptide reads, in one-letter code: Probable cytosol aminopeptidase (497 aa).

Mn(2+) contacts are provided by lysine 263 and aspartate 268. Lysine 275 is a catalytic residue. Positions 286, 345, and 347 each coordinate Mn(2+). Arginine 349 is a catalytic residue.

This sequence belongs to the peptidase M17 family. It depends on Mn(2+) as a cofactor.

The protein resides in the cytoplasm. The enzyme catalyses Release of an N-terminal amino acid, Xaa-|-Yaa-, in which Xaa is preferably Leu, but may be other amino acids including Pro although not Arg or Lys, and Yaa may be Pro. Amino acid amides and methyl esters are also readily hydrolyzed, but rates on arylamides are exceedingly low.. It catalyses the reaction Release of an N-terminal amino acid, preferentially leucine, but not glutamic or aspartic acids.. Presumably involved in the processing and regular turnover of intracellular proteins. Catalyzes the removal of unsubstituted N-terminal amino acids from various peptides. The polypeptide is Probable cytosol aminopeptidase (Rhizobium meliloti (strain 1021) (Ensifer meliloti)).